The chain runs to 153 residues: MTINTEVFIRRNKLRRHFESEFRQINNEIREASKAAGVSSFHLKYSQHLLDRAIQREIDETYVFELFHKIKDHVLEVNEFLSMPPRPDIDEDFIDGVEYRPGRLEITDGNLWLGFTVCKPNEKFKDPSLQCRMAIINSRRLPGKASKAVIKTQ.

With respect to regulation, activity is stimulated 10- to 100-fold by host ribosomal protein S1, which also helps confer substrate choice. Functionally, essential to the early nucleolytic processing of a number of T4 messenger RNAs. Specifically cleaves after the GG dinucleotide GGAG within consensus 5'-GGAGRAYARAA-3' (R is a purine and Y is a pyrimidine) sequences found mainly in translation initiation sites. This is Endoribonuclease RegB (regB) from Enterobacteria phage T4 (Bacteriophage T4).